The primary structure comprises 220 residues: ATP-dependent dethiobiotin synthetase BioD (220 aa).

An ATP-binding site is contributed by 13–18 (EVGKTV). T17 contacts Mg(2+). The active site involves K38. A substrate-binding site is contributed by S42. Residues D55, 116–119 (EGAG), 176–177 (NR), and N212 each bind ATP. Positions 55 and 116 each coordinate Mg(2+).

The protein belongs to the dethiobiotin synthetase family. Homodimer. The cofactor is Mg(2+).

The protein resides in the cytoplasm. It catalyses the reaction (7R,8S)-7,8-diammoniononanoate + CO2 + ATP = (4R,5S)-dethiobiotin + ADP + phosphate + 3 H(+). It functions in the pathway cofactor biosynthesis; biotin biosynthesis; biotin from 7,8-diaminononanoate: step 1/2. Functionally, catalyzes a mechanistically unusual reaction, the ATP-dependent insertion of CO2 between the N7 and N8 nitrogen atoms of 7,8-diaminopelargonic acid (DAPA, also called 7,8-diammoniononanoate) to form a ureido ring. This Photobacterium profundum (strain SS9) protein is ATP-dependent dethiobiotin synthetase BioD.